The following is a 388-amino-acid chain: MRARRGLLRLPRRSLLAALFFFSLSSSLLYFVYVAPGIVNTYLFMMQAQGILIRDNVRTIGAQVYEQVLRSAYAKRNSSVNDSDYPLDLNHSETFLQTTTFLPEDFTYFANHTCPERLPSMKGPIDINMSEIGMDYIHELFSKDPTIKLGGHWKPSDCMPRWKVAILIPFRNRHEHLPVLFRHLLPMLQRQRLQFAFYVVEQVGTQPFNRAMLFNVGFQEAMKDLDWDCLIFHDVDHIPESDRNYYGCGQMPRHFATKLDKYMYLLPYTEFFGGVSGLTVEQFRKINGFPNAFWGWGGEDDDLWNRVQNAGYSVSRPEGDTGKYKSIPHHHRGEVQFLGRYALLRKSKERQGLDGLNNLNYFANITYDALYKNITVNLTPELAQVNEY.

At 1–14 (MRARRGLLRLPRRS) the chain is on the cytoplasmic side. The helical; Signal-anchor for type II membrane protein transmembrane segment at 15–35 (LLAALFFFSLSSSLLYFVYVA) threads the bilayer. Topologically, residues 36–388 (PGIVNTYLFM…TPELAQVNEY (353 aa)) are lumenal. N-linked (GlcNAc...) asparagine glycans are attached at residues N77, N81, N90, N111, and N128. C114 and C158 are joined by a disulfide. UDP-alpha-D-galactose contacts are provided by residues 169 to 173 (PFRNR), 208 to 210 (FNR), 235 to 236 (VD), Y264, and W296. C229 and C248 are joined by a disulfide. Mn(2+) is bound at residue D236. 298–301 (GEDD) is an N-acetyl-D-glucosamine binding site. H329 is a Mn(2+) binding site. 329–330 (HH) contributes to the UDP-alpha-D-galactose binding site. R340 is an N-acetyl-D-glucosamine binding site. N-linked (GlcNAc...) asparagine glycans are attached at residues N364 and N373.

Belongs to the glycosyltransferase 7 family. Mn(2+) serves as cofactor. As to expression, ubiquitously expressed.

Its subcellular location is the golgi apparatus. It is found in the golgi stack membrane. It catalyses the reaction a beta-D-glucosyl-(1&lt;-&gt;1')-N-acylsphing-4-enine + UDP-alpha-D-galactose = a beta-D-Gal-(1-&gt;4)-beta-D-Glc-(1&lt;-&gt;1)-Cer(d18:1(4E)) + UDP + H(+). Its pathway is protein modification; protein glycosylation. It functions in the pathway sphingolipid metabolism. Its function is as follows. Catalyzes the synthesis of lactosylceramide (LacCer) via the transfer of galactose from UDP-galactose to glucosylceramide (GlcCer). LacCer is the starting point in the biosynthesis of all gangliosides (membrane-bound glycosphingolipids) which play pivotal roles in the CNS including neuronal maturation and axonal and myelin formation. Plays a role in the glycosylation of BMPR1A and regulation of its protein stability. Essential for extraembryonic development during early embryogenesis. The sequence is that of Beta-1,4-galactosyltransferase 5 from Homo sapiens (Human).